Here is a 256-residue protein sequence, read N- to C-terminus: DNA repair protein RecO (256 aa).

This sequence belongs to the RecO family.

In terms of biological role, involved in DNA repair and RecF pathway recombination. The chain is DNA repair protein RecO from Rhizobium leguminosarum bv. trifolii (strain WSM2304).